Here is a 250-residue protein sequence, read N- to C-terminus: Isoprenyl transferase (250 aa).

D27 is a catalytic residue. D27 contributes to the Mg(2+) binding site. Substrate contacts are provided by residues G28–R31, W32, H48, and S76–E78. The Proton acceptor role is filled by N79. Substrate contacts are provided by residues F80, R82, R199, and R205–S207. E218 lines the Mg(2+) pocket.

It belongs to the UPP synthase family. In terms of assembly, homodimer. The cofactor is Mg(2+).

Its function is as follows. Catalyzes the condensation of isopentenyl diphosphate (IPP) with allylic pyrophosphates generating different type of terpenoids. This Chlamydia pneumoniae (Chlamydophila pneumoniae) protein is Isoprenyl transferase.